Consider the following 415-residue polypeptide: Actin-like protein 9 (415 aa).

Positions Met1–Thr22 are disordered.

The protein belongs to the actin family. In terms of assembly, interacts with ACTL7A.

The protein localises to the cytoplasmic vesicle. The protein resides in the secretory vesicle. Its subcellular location is the acrosome. It localises to the cytoplasm. It is found in the cytoskeleton. The protein localises to the perinuclear theca. Functionally, testis-specic protein that plays an important role in fusion of proacrosomal vesicles and perinuclear theca formation. This chain is Actin-like protein 9 (Actl9), found in Mus musculus (Mouse).